The sequence spans 485 residues: Auxin transporter protein 1 (485 aa).

The Cytoplasmic portion of the chain corresponds to methionine 1 to glutamine 59. Polar residues predominate over residues aspartate 12–arginine 22. The interval aspartate 12–serine 33 is disordered. Residues threonine 23–glycine 32 are compositionally biased toward basic and acidic residues. The helical transmembrane segment at valine 60–leucine 77 threads the bilayer. The Extracellular segment spans residues serine 78–glycine 79. A helical transmembrane segment spans residues isoleucine 80–leucine 100. At tyrosine 101–lysine 135 the chain is on the cytoplasmic side. Residues alanine 136–alanine 156 traverse the membrane as a helical segment. Over cysteine 157–threonine 172 the chain is Extracellular. The helical transmembrane segment at tryptophan 173–tyrosine 193 threads the bilayer. Residues arginine 194–tryptophan 196 are Cytoplasmic-facing. A helical transmembrane segment spans residues serine 197 to isoleucine 217. At histidine 218–leucine 232 the chain is on the extracellular side. Residues valine 233 to valine 253 form a helical membrane-spanning segment. Residues glutamate 254–lysine 266 lie on the Cytoplasmic side of the membrane. The chain crosses the membrane as a helical span at residues tyrosine 267 to valine 287. Residues tyrosine 288–alanine 314 lie on the Extracellular side of the membrane. Residues valine 315 to phenylalanine 335 traverse the membrane as a helical segment. Topologically, residues valine 336–arginine 356 are cytoplasmic. The chain crosses the membrane as a helical span at residues leucine 357–asparagine 377. Serine 378 is a topological domain (extracellular). A helical transmembrane segment spans residues alanine 379–leucine 399. The Cytoplasmic segment spans residues threonine 400 to tyrosine 425. The chain crosses the membrane as a helical span at residues valine 426–alanine 446. The Extracellular segment spans residues serine 447–leucine 485.

This sequence belongs to the amino acid/polyamine transporter 2 family. Amino acid/auxin permease (AAAP) (TC 2.A.18.1) subfamily. As to expression, expressed in root and shoot apical tissues. In root apex, confined to stele initials, protophloem poles, statolith-containing S2 columella cells, lateral root cap cells (LRC), and in epidermal cells from the distal elongation zone (DEZ) up to central elongation zone (CEZ).

The protein resides in the cell membrane. Its activity is regulated as follows. Auxin uptake mediated by AUX1 is inhibited by chromosaponin-1 (CSI), 1-naphthoxyacetic acid (1-NOA) and 3-chloro-4-hydroxyphenylacetic acid (CHPAA). Carrier protein involved in proton-driven auxin influx. Mediates the formation of auxin gradient from developing leaves (site of auxin biosynthesis) to tips by contributing to the loading of auxin in vascular tissues and facilitating acropetal (base to tip) auxin transport within inner tissues of the root apex, and basipetal (tip to base) auxin transport within outer tissues of the root apex. Unloads auxin from the mature phloem to deliver the hormone to the root meristem via the protophloem cell files. Coordinated subcellular localization of AUX1 is regulated by a brefeldin A-sensitive (BFA) vesicle trafficking process. Involved in lateral root formation, trichoblast polarization and root hair elongation. Required for gravitropism and thigmotropism, especially in roots, by modulating responses to auxin, ethylene and cytokinins such as benzyladenine (BA). Needed for ammonium-mediated root-growth inhibition. Confers sensitivity to the herbicide 2,4-dichlorophenoxyacetic acid (2,4-D, auxin analog), and to polar auxin transport inhibitors such as N-1-naphthylphthalamic acid (NPA) and 2,3,5-triiodobenzoic acid (TIBA). The sequence is that of Auxin transporter protein 1 (AUX1) from Arabidopsis thaliana (Mouse-ear cress).